Reading from the N-terminus, the 794-residue chain is DNA mismatch repair protein pms1 (794 aa).

Disordered stretches follow at residues 351–384 and 409–442; these read SQIP…SFSY and GASL…TASS. Residues 352-371 show a composition bias toward polar residues; sequence QIPDSSGDSTDQELPQSIPA. Residues 419-429 show a composition bias toward basic and acidic residues; sequence LPERLQKDSMR. Over residues 430–442 the composition is skewed to polar residues; sequence RSSPLNEKVTASS.

This sequence belongs to the DNA mismatch repair MutL/HexB family.

Functionally, this protein is involved in the repair of mismatches in DNA. This Schizosaccharomyces pombe (strain 972 / ATCC 24843) (Fission yeast) protein is DNA mismatch repair protein pms1 (pms1).